A 258-amino-acid polypeptide reads, in one-letter code: MTQHSRDTPQFYLTAPSPCPYLPGRQERKVFTHLVGPKAGDLNDLLTHGGFRRSQSIAYRPACDQCRACVSVRVVANEFRPSRAQRKILGRNADVVGELRSPVPTSEQYSVFRAYLDRRHRDGGMADMTVLDYAMMVEDSHVKTRLIEYRRRKLEPGSTGRGEELLAVALTDVLNDGLSMVYSFFEPAEDRRSLGTFMILDHIARARRLGLPYVYLGYWIDGSQKMDYKGRYLPQQRLAPSGWERVGAEDDGLIEPQE.

Belongs to the R-transferase family. Bpt subfamily.

The protein localises to the cytoplasm. The catalysed reaction is N-terminal L-glutamyl-[protein] + L-leucyl-tRNA(Leu) = N-terminal L-leucyl-L-glutamyl-[protein] + tRNA(Leu) + H(+). The enzyme catalyses N-terminal L-aspartyl-[protein] + L-leucyl-tRNA(Leu) = N-terminal L-leucyl-L-aspartyl-[protein] + tRNA(Leu) + H(+). Functionally, functions in the N-end rule pathway of protein degradation where it conjugates Leu from its aminoacyl-tRNA to the N-termini of proteins containing an N-terminal aspartate or glutamate. This Rhodopseudomonas palustris (strain BisA53) protein is Aspartate/glutamate leucyltransferase.